The sequence spans 681 residues: Chaperone protein htpG (681 aa).

The segment at 1–326 (MQKGNIGVTT…SPDIPLNVSR (326 aa)) is a; substrate-binding. Positions 327-545 (SYLQSDSNVK…YMRRMKEMAN (219 aa)) are b. The interval 546 to 681 (IQAGMSFYGE…NFVKRSIELI (136 aa)) is c. The segment at 601-620 (DALKKKQEGKKDEDIPTAEK) is disordered.

This sequence belongs to the heat shock protein 90 family. In terms of assembly, homodimer.

The protein resides in the cytoplasm. Functionally, molecular chaperone. Has ATPase activity. In Bacteroides fragilis (strain 638R), this protein is Chaperone protein htpG.